The primary structure comprises 218 residues: ATP-dependent dethiobiotin synthetase BioD (218 aa).

9 to 15 is an ATP binding site; sequence TNAGKTT. A Mg(2+)-binding site is contributed by threonine 14. The active site involves lysine 35. Phosphate is bound at residue lysine 35. Threonine 39 serves as a coordination point for substrate. ATP-binding positions include aspartate 50, glutamate 116, and 116-119; that span reads EGAG. Positions 50 and 116 each coordinate Mg(2+). 116–119 contributes to the phosphate binding site; sequence EGAG. 151–154 serves as a coordination point for substrate; it reads GLIN. ATP contacts are provided by residues asparagine 175 and 175-177; that span reads NLK.

Belongs to the dethiobiotin synthetase family. Homodimer. It depends on Mg(2+) as a cofactor.

It is found in the cytoplasm. The catalysed reaction is (7R,8S)-7,8-diammoniononanoate + CO2 + ATP = (4R,5S)-dethiobiotin + ADP + phosphate + 3 H(+). Its pathway is cofactor biosynthesis; biotin biosynthesis; biotin from 7,8-diaminononanoate: step 1/2. Functionally, catalyzes a mechanistically unusual reaction, the ATP-dependent insertion of CO2 between the N7 and N8 nitrogen atoms of 7,8-diaminopelargonic acid (DAPA, also called 7,8-diammoniononanoate) to form a ureido ring. The chain is ATP-dependent dethiobiotin synthetase BioD from Helicobacter pylori (strain ATCC 700392 / 26695) (Campylobacter pylori).